The primary structure comprises 184 residues: Transmembrane protein 140 (184 aa).

Over 1–12 (MAISRVWRNRLS) the chain is Cytoplasmic. The chain crosses the membrane as a helical span at residues 13-33 (FMAIMILVAMVLSLMSYALLW). Topologically, residues 34–83 (KAGNLTDVPNLRIGFYNFCLWKEDIGSLECYNFPELGVLGIPQVGLALAR) are extracellular. The N-linked (GlcNAc...) asparagine glycan is linked to Asn-37. A helical transmembrane segment spans residues 84–104 (LGVYGALVLAVFVPLPLLLAQ). The Cytoplasmic segment spans residues 105–117 (CNSDEGEWRLAVG). A helical transmembrane segment spans residues 118–138 (FLGASSVLLAGGLSLFLFLVW). Over 139 to 149 (KWLRLSFLGPG) the chain is Extracellular. Residues 150–170 (FLSLCLAQALLIILLMAMVMF) traverse the membrane as a helical segment. Over 171–184 (PPRDKKDKNHWENC) the chain is Cytoplasmic.

The protein resides in the membrane. The sequence is that of Transmembrane protein 140 (Tmem140) from Rattus norvegicus (Rat).